The sequence spans 400 residues: Nicotinate phosphoribosyltransferase (400 aa).

At histidine 220 the chain carries Phosphohistidine; by autocatalysis.

It belongs to the NAPRTase family. In terms of processing, transiently phosphorylated on a His residue during the reaction cycle. Phosphorylation strongly increases the affinity for substrates and increases the rate of nicotinate D-ribonucleotide production. Dephosphorylation regenerates the low-affinity form of the enzyme, leading to product release.

It carries out the reaction nicotinate + 5-phospho-alpha-D-ribose 1-diphosphate + ATP + H2O = nicotinate beta-D-ribonucleotide + ADP + phosphate + diphosphate. Its pathway is cofactor biosynthesis; NAD(+) biosynthesis; nicotinate D-ribonucleotide from nicotinate: step 1/1. Its function is as follows. Catalyzes the synthesis of beta-nicotinate D-ribonucleotide from nicotinate and 5-phospho-D-ribose 1-phosphate at the expense of ATP. The chain is Nicotinate phosphoribosyltransferase from Escherichia coli O157:H7.